The chain runs to 217 residues: Chaperone protein TorD (217 aa).

This sequence belongs to the TorD/DmsD family. TorD subfamily.

The protein localises to the cytoplasm. Its function is as follows. Involved in the biogenesis of TorA. Acts on TorA before the insertion of the molybdenum cofactor and, as a result, probably favors a conformation of the apoenzyme that is competent for acquiring the cofactor. This chain is Chaperone protein TorD, found in Shewanella oneidensis (strain ATCC 700550 / JCM 31522 / CIP 106686 / LMG 19005 / NCIMB 14063 / MR-1).